Here is a 164-residue protein sequence, read N- to C-terminus: ATP synthase subunit b (164 aa).

The helical transmembrane segment at 12 to 32 (FILVTGSVIVLLLLIKAFAWG) threads the bilayer.

This sequence belongs to the ATPase B chain family. As to quaternary structure, F-type ATPases have 2 components, F(1) - the catalytic core - and F(0) - the membrane proton channel. F(1) has five subunits: alpha(3), beta(3), gamma(1), delta(1), epsilon(1). F(0) has three main subunits: a(1), b(2) and c(10-14). The alpha and beta chains form an alternating ring which encloses part of the gamma chain. F(1) is attached to F(0) by a central stalk formed by the gamma and epsilon chains, while a peripheral stalk is formed by the delta and b chains.

The protein localises to the cell membrane. In terms of biological role, f(1)F(0) ATP synthase produces ATP from ADP in the presence of a proton or sodium gradient. F-type ATPases consist of two structural domains, F(1) containing the extramembraneous catalytic core and F(0) containing the membrane proton channel, linked together by a central stalk and a peripheral stalk. During catalysis, ATP synthesis in the catalytic domain of F(1) is coupled via a rotary mechanism of the central stalk subunits to proton translocation. Component of the F(0) channel, it forms part of the peripheral stalk, linking F(1) to F(0). This chain is ATP synthase subunit b, found in Streptococcus equi subsp. zooepidemicus (strain MGCS10565).